The primary structure comprises 267 residues: Tryptophan synthase alpha chain (267 aa).

Catalysis depends on proton acceptor residues Glu-49 and Asp-60.

Belongs to the TrpA family. In terms of assembly, tetramer of two alpha and two beta chains.

The catalysed reaction is (1S,2R)-1-C-(indol-3-yl)glycerol 3-phosphate + L-serine = D-glyceraldehyde 3-phosphate + L-tryptophan + H2O. It functions in the pathway amino-acid biosynthesis; L-tryptophan biosynthesis; L-tryptophan from chorismate: step 5/5. Functionally, the alpha subunit is responsible for the aldol cleavage of indoleglycerol phosphate to indole and glyceraldehyde 3-phosphate. The polypeptide is Tryptophan synthase alpha chain (Solibacter usitatus (strain Ellin6076)).